Here is a 343-residue protein sequence, read N- to C-terminus: Uroporphyrinogen decarboxylase (343 aa).

Substrate contacts are provided by residues 23 to 27, aspartate 73, tyrosine 150, serine 205, and histidine 322; that span reads RQAGR.

It belongs to the uroporphyrinogen decarboxylase family. Homodimer.

Its subcellular location is the cytoplasm. It carries out the reaction uroporphyrinogen III + 4 H(+) = coproporphyrinogen III + 4 CO2. The protein operates within porphyrin-containing compound metabolism; protoporphyrin-IX biosynthesis; coproporphyrinogen-III from 5-aminolevulinate: step 4/4. Its function is as follows. Catalyzes the decarboxylation of four acetate groups of uroporphyrinogen-III to yield coproporphyrinogen-III. This is Uroporphyrinogen decarboxylase from Cereibacter sphaeroides (strain ATCC 17025 / ATH 2.4.3) (Rhodobacter sphaeroides).